The primary structure comprises 308 residues: Neurexophilin-4 (308 aa).

The N-terminal stretch at 1-23 (MRLLPEWFLLLFGPWLLRKAVSA) is a signal peptide. The II stretch occupies residues 24–84 (QIPESGRPQY…GALARAGAAG (61 aa)). Residues 40–51 (AAGAGAPGQQLP) show a composition bias toward low complexity. The disordered stretch occupies residues 40–59 (AAGAGAPGQQLPEPRSSDGL). Residues N72, N133, N143, and N149 are each glycosylated (N-linked (GlcNAc...) asparagine). Positions 85-163 (ALPAQRTKRK…IVPPSKRVEF (79 aa)) are III. Positions 164-224 (GGVWLPGPVP…PLGGALGVPG (61 aa)) are IV (linker domain). A v (Cys-rich) region spans residues 225-308 (AKESRAFNCH…NFQSEHPYFG (84 aa)).

It belongs to the neurexophilin family. May be proteolytically processed at the boundary between the N-terminal non-conserved and the central conserved domain in neuron-like cells. Expressed in brain, spleen, and testis.

The protein localises to the secreted. May be signaling molecules that resemble neuropeptides and that act by binding to alpha-neurexins and possibly other receptors. The sequence is that of Neurexophilin-4 (NXPH4) from Homo sapiens (Human).